Reading from the N-terminus, the 131-residue chain is uncharacterized protein (131 aa).

Residues 101-131 (SWWPPSGVVRGGPSSWPPSGVAEPREALGLP) form a disordered region.

This is an uncharacterized protein from Homo sapiens (Human).